The chain runs to 223 residues: Ubiquitin carboxyl-terminal hydrolase isozyme L1 (223 aa).

Position 1 is an N-acetylmethionine (Met-1). The UCH catalytic domain occupies Gln-2–Lys-221. Positions Pro-5 to Pro-10 are interaction with ubiquitin. Cys-90 acts as the Nucleophile in catalysis. Ser-125 carries the phosphoserine modification. His-161 acts as the Proton donor in catalysis. The segment at Glu-211–Ala-216 is interaction with ubiquitin. The S-farnesyl cysteine moiety is linked to residue Cys-220. Residues Lys-221 to Ala-223 constitute a propeptide, removed in mature form.

It belongs to the peptidase C12 family. As to quaternary structure, monomer. Homodimer. Interacts with COPS5 and SNCA. In terms of processing, O-glycosylated. Expressed in the placenta at all stages of pregnancy. Expression increases as pregnancy progresses.

The protein resides in the cytoplasm. The protein localises to the endoplasmic reticulum membrane. It localises to the nucleus. It carries out the reaction Thiol-dependent hydrolysis of ester, thioester, amide, peptide and isopeptide bonds formed by the C-terminal Gly of ubiquitin (a 76-residue protein attached to proteins as an intracellular targeting signal).. Functionally, ubiquitin-protein hydrolase involved both in the processing of ubiquitin precursors and of ubiquitinated proteins. This enzyme is a thiol protease that recognizes and hydrolyzes a peptide bond at the C-terminal glycine of ubiquitin. Also binds to free monoubiquitin and may prevent its degradation in lysosomes. The homodimer may have ATP-independent ubiquitin ligase activity. The sequence is that of Ubiquitin carboxyl-terminal hydrolase isozyme L1 (UCHL1) from Macaca fascicularis (Crab-eating macaque).